A 200-amino-acid chain; its full sequence is Acyl-homoserine-lactone synthase (200 aa).

Belongs to the autoinducer synthase family.

It carries out the reaction a fatty acyl-[ACP] + S-adenosyl-L-methionine = an N-acyl-L-homoserine lactone + S-methyl-5'-thioadenosine + holo-[ACP] + H(+). In terms of biological role, required for the synthesis of BHL (N-butanoyl-L-homoserine lactone). This is Acyl-homoserine-lactone synthase (swrI) from Serratia liquefaciens.